Here is a 461-residue protein sequence, read N- to C-terminus: Kynurenine 3-monooxygenase (461 aa).

Helical transmembrane passes span 395-415 (GFMNAIFPKSWIPLYSMVTFT) and 432-452 (ILSNLWKTTSTLALIGAAIGI).

It belongs to the aromatic-ring hydroxylase family. KMO subfamily. The cofactor is FAD.

Its subcellular location is the mitochondrion. The protein localises to the membrane. The catalysed reaction is L-kynurenine + NADPH + O2 + H(+) = 3-hydroxy-L-kynurenine + NADP(+) + H2O. It functions in the pathway cofactor biosynthesis; NAD(+) biosynthesis; quinolinate from L-kynurenine: step 1/3. Catalyzes the hydroxylation of L-kynurenine (L-Kyn) to form 3-hydroxy-L-kynurenine (L-3OHKyn). Required for synthesis of quinolinic acid. The polypeptide is Kynurenine 3-monooxygenase (Caenorhabditis briggsae).